A 470-amino-acid polypeptide reads, in one-letter code: MGQSGRSRHQKRNRAQAQLRNLESYAAQPHSFVFTRGRAGRNVRQLSLDVRRVMEPLTATRLQVRKKNSLKDCVAVAGPLGVTHFLILTKTDNSVYLKLMRLPGGPTLTFQISKYTLIRDVVSSLRRHRMHEQQFNHPPLLVLNSFGPQGMHIKLMATMFQNLFPSINVHTVNLNTIKRCLLINYNPDSQELDFRHYSVKVVPVGASRGMKKLLQEKFPNMSRLQDISELLATGVGLSDSEVEPDGEHNTTELPQAVAGRGNMQAQQSAVRLTEIGPRMTLQLIKIQEGVGNGNVLFHSFVHKTEEELQAILAAKEEKLRLKAQRQNQQAENLQRKQELREAHKKKSLAGIKRARARADGDSDAEDPGAPPEAVGAGQPEDEEDDAEYFRQAVGEEPDEDLFPTAAKRRRQGGPLGKKQRGKEQRPGNKGRGQGGNWQALKLQGRSQRGKAKPRPRATHQDSRPASRRRN.

The Brix domain maps to 29 to 292 (PHSFVFTRGR…LIKIQEGVGN (264 aa)). Phosphoserine is present on residues S238 and S240. Disordered stretches follow at residues 240–264 (SEVEPDGEHNTTELPQAVAGRGNMQ) and 323–470 (AQRQ…RRRN). Basic residues predominate over residues 342 to 355 (AHKKKSLAGIKRAR). S362 bears the Phosphoserine mark. At K441 the chain carries N6-acetyllysine. Positions 447-457 (QRGKAKPRPRA) are enriched in basic residues.

It localises to the nucleus. The protein resides in the nucleolus. Functionally, may have a role in cell growth. In Mus musculus (Mouse), this protein is Suppressor of SWI4 1 homolog (Ppan).